A 675-amino-acid polypeptide reads, in one-letter code: Collagen alpha-3(IX) chain (675 aa).

An N-terminal signal peptide occupies residues 1–21; sequence MTVFPTLGLLFLCQLLATTSA. Disordered stretches follow at residues 22–517 and 542–660; these read QRVG…KEAS and KPLS…ICDT. The tract at residues 25-515 is triple-helical region 3 (COL3); it reads GPQGPPGPRG…TGKPGPPGKE (491 aa). 2 stretches are compositionally biased toward pro residues: residues 27-38 and 51-60; these read QGPPGPRGPPGP and SGLPGPPGPK. Residues 62-87 show a composition bias toward low complexity; it reads APGKPGAAGEAGLPGLPGVDGLTGTD. Pro residues predominate over residues 105-125; sequence AGPPGPAGKGLPGPPGPPGPS. Residues 126–135 are compositionally biased toward gly residues; that stretch reads GLPGGNGFRG. 2 stretches are compositionally biased toward pro residues: residues 136–155 and 173–184; these read PPGP…PGPP and LCPPGPPGPPGM. Residues 218-233 show a composition bias toward low complexity; the sequence is PGSVGLQGPRGLRGLP. Residues 242 to 244 carry the Cell attachment site motif; the sequence is RGD. A compositionally biased stretch (basic and acidic residues) spans 301–317; the sequence is KDGRDGAPGLDGEKGDA. Residues 361–374 show a composition bias toward low complexity; that stretch reads EPGIPGDVGIPGDR. An N-linked (GlcNAc...) asparagine glycan is attached at asparagine 479. Low complexity predominate over residues 481 to 508; the sequence is TAGAPGIPGHPGPMGHQGEQGVPGITGK. The interval 516–546 is nonhelical region 3 (NC3); the sequence is ASEQHIRELCGEMINDQIAQLAANLRKPLSP. The tract at residues 547 to 626 is triple-helical region 2 (COL2); it reads GMTGRPGPAG…QGLPGVPGIS (80 aa). Low complexity predominate over residues 569 to 582; sequence HPGARGPPGYRGPT. A Cell attachment site motif is present at residues 591-593; the sequence is RGD. Residues 613–624 show a composition bias toward low complexity; it reads DQGPQGLPGVPG. The interval 627–631 is nonhelical region 2 (NC2); the sequence is KNGRD. The tract at residues 632–658 is triple-helical region 1 (COL1); that stretch reads GAQGEPGLPGDPGTPGAVGAQGTPGIC. Residues 659 to 675 form a nonhelical region 1 (NC1) region; that stretch reads DTSACMGAVGASTSKKS.

It belongs to the fibril-associated collagens with interrupted helices (FACIT) family. As to quaternary structure, trimers composed of three different chains: alpha 1(IX), alpha 2(IX), and alpha 3(IX). In terms of processing, prolines at the third position of the tripeptide repeating unit (G-X-Y) are hydroxylated in some or all of the chains.

The protein resides in the secreted. The protein localises to the extracellular space. It is found in the extracellular matrix. Functionally, collagen type IX is a minor cartilage non-fibrillar collagen. It is associated with type II collagen fibrils. The protein is Collagen alpha-3(IX) chain (COL9A3) of Gallus gallus (Chicken).